Here is a 968-residue protein sequence, read N- to C-terminus: Probable histidine kinase 1 (968 aa).

Coiled coils occupy residues Leu89–Glu120 and Lys169–Thr204. In terms of domain architecture, Histidine kinase spans Thr372 to Ile655. His375 is subject to Phosphohistidine; by autocatalysis. Positions Ser737–Lys757 are disordered. Residues Thr738–Arg754 show a composition bias toward polar residues. The region spanning Lys818 to Leu965 is the Response regulatory domain. At Asp867 the chain carries 4-aspartylphosphate.

Post-translationally, activation probably requires a transfer of a phosphate group between a His in the transmitter domain and an Asp of the receiver domain.

The enzyme catalyses ATP + protein L-histidine = ADP + protein N-phospho-L-histidine.. Functionally, cytokinin receptor related to bacterial two-component regulators. Functions as a histidine kinase and transmits the stress signal to a downstream MAPK cascade. The polypeptide is Probable histidine kinase 1 (Oryza sativa subsp. indica (Rice)).